A 210-amino-acid polypeptide reads, in one-letter code: Glutathione S-transferase P (210 aa).

The GST N-terminal domain occupies 2–81 (PPYTVVYFPV…HLGRTLGLYG (80 aa)). The residue at position 4 (Tyr-4) is a Phosphotyrosine; by EGFR. Residues Tyr-8, Arg-14, Trp-39, Lys-45, and 52-53 (QL) contribute to the glutathione site. Residue Thr-62 is modified to Phosphothreonine. Position 65 to 66 (65 to 66 (QS)) interacts with glutathione. In terms of domain architecture, GST C-terminal spans 83–204 (DQREAALVDM…ASPEHVNLPI (122 aa)). 2 positions are modified to N6-succinyllysine: Lys-103 and Lys-116. The residue at position 128 (Lys-128) is an N6-acetyllysine.

Belongs to the GST superfamily. Pi family. In terms of assembly, homodimer. Interacts with CDK5.

It localises to the cytoplasm. Its subcellular location is the mitochondrion. The protein localises to the nucleus. It carries out the reaction RX + glutathione = an S-substituted glutathione + a halide anion + H(+). The catalysed reaction is prostaglandin J2 + glutathione = prostaglandin J2-S-(R)-glutathione. The enzyme catalyses prostaglandin J2 + glutathione = prostaglandin J2-S-(S)-glutathione. It catalyses the reaction prostaglandin A2 + glutathione = prostaglandin A2-S-(S)-glutathione. It carries out the reaction 11(S)-hydroxy-14(S),15(S)-epoxy-(5Z,8Z,12E)-eicosatrienoate + glutathione = (11S,15S)-dihydroxy-14(R)-S-glutathionyl-(5Z,8Z,12E)-eicosatrienoate. Conjugation of reduced glutathione to a wide number of exogenous and endogenous hydrophobic electrophiles. Involved in the formation of glutathione conjugates of both prostaglandin A2 (PGA2) and prostaglandin J2 (PGJ2). Participates in the formation of novel hepoxilin regioisomers. Negatively regulates CDK5 activity via p25/p35 translocation to prevent neurodegeneration. This is Glutathione S-transferase P (GSTP1) from Pongo abelii (Sumatran orangutan).